The primary structure comprises 132 residues: uncharacterized protein (132 aa).

This is an uncharacterized protein from Acanthamoeba polyphaga (Amoeba).